The chain runs to 623 residues: MGIANKLRLSSSSLSRILHRRILYSSAVRSFTTSEGHRPTIVHKQGLDILHDPWFNKGTAFTMTERNRLDLRGLLPPNVMDSEQQIFRFMTDLKRLEEQARDGPSDPNALAKWRILNRLHDRNETMYYKVLINNIEEYAPIVYTPTVGLVCQNYSGLFRRPRGMYFSAEDRGEMMSMVYNWPAEQVDMIVVTDGSRILGLGDLGVHGIGIAVGKLDLYVAAAGINPQRVLPVMIDVGTNNEKLRNDPMYLGLQQRRLEDDDYIDVIDEFMEAVYTRWPHVIVQFEDFQSKWAFKLLQRYRCTYRMFNDDVQGTAGVAIAGLLGAVRAQGRPMIDFPKMKIVVAGAGSAGIGVLNAARKTMARMLGNTETAFDSAQSQFWVVDAQGLITEGRENIDPEAQPFARKTKEMERQGLKEGATLVEVVREVKPDVLLGLSAVGGLFSKEVLEAMKGSTSTRPAIFAMSNPTKNAECTPQDAFSILGENMIFASGSPFKNVEFGNGHVGHCNQGNNMYLFPGIGLGTLLSGAPIVSDGMLQAASECLAAYMSEEEVLEGIIYPPISRIRDITKRIAAAVIKEAIEEDLVEGYREMDAREIQKLDEEGLMEYVENNMWNPEYPTLVYKDD.

Residues 1 to 38 (MGIANKLRLSSSSLSRILHRRILYSSAVRSFTTSEGHR) constitute a mitochondrion transit peptide. The Proton donor role is filled by Y143. R196 is an NAD(+) binding site. The active-site Proton acceptor is K214. The a divalent metal cation site is built by E285, D286, and D309. Residues D309 and N464 each coordinate NAD(+).

The protein belongs to the malic enzymes family. As to quaternary structure, homodimer. Heterodimer of two related subunits in NAD-MEH complex. Interacts with NAD-ME2. Mg(2+) serves as cofactor. It depends on Mn(2+) as a cofactor. As to expression, expressed in leaves, stems, flowers, and roots (at protein level).

It is found in the mitochondrion. It carries out the reaction (S)-malate + NAD(+) = pyruvate + CO2 + NADH. Activated by oxaloacetate (OAA), 2-ketoglutarate, succinate and fumarate as homodimer and by OAA, 2-ketoglutarate, succinate, fumarate and coenzyme A (acetyl-CoA and CoA) as heterodimer NAD-MEH. Involved in the regulation of sugars and amino acids metabolisms during the night period. This Arabidopsis thaliana (Mouse-ear cress) protein is NAD-dependent malic enzyme 1, mitochondrial (NAD-ME1).